Reading from the N-terminus, the 630-residue chain is Arginine--tRNA ligase (630 aa).

Residues 120–130 (ANPVHPLHIGH) carry the 'HIGH' region motif.

This sequence belongs to the class-I aminoacyl-tRNA synthetase family.

The protein localises to the cytoplasm. It catalyses the reaction tRNA(Arg) + L-arginine + ATP = L-arginyl-tRNA(Arg) + AMP + diphosphate. This chain is Arginine--tRNA ligase, found in Pyrobaculum aerophilum (strain ATCC 51768 / DSM 7523 / JCM 9630 / CIP 104966 / NBRC 100827 / IM2).